Consider the following 573-residue polypeptide: Probable zinc metallopeptidase EGY3, chloroplastic (573 aa).

The transit peptide at 1 to 50 (MASLFVSTPSSSLTLKSCHSLHLRRFDRAEFSNFGKASVNQTTRSRHSLR) directs the protein to the chloroplast. A disordered region spans residues 38 to 105 (SVNQTTRSRH…EKKSKQQEMD (68 aa)). Composition is skewed to basic and acidic residues over residues 52 to 62 (SAEDDRVREPV) and 96 to 105 (EKKSKQQEMD). A coiled-coil region spans residues 122 to 185 (EAAIKLEKTR…KALDLNKLKS (64 aa)). A run of 7 helical transmembrane segments spans residues 274 to 294 (VSAIALCVTTFGTIALMSGFF), 305 to 325 (IANVVPLFGGFLSILGVSEIA), 376 to 396 (ASAYLTSLLLAAAAFISDGSF), 414 to 434 (PLLSFVQFVVGPYADDLGNVL), 441 to 461 (VGVPVDPLAFAGLLGMVVTSL), 493 to 513 (LLLGIGGLSGSVLCLAWGLFA), and 536 to 556 (FAWGIVLGLICFLTLFPNSGG).

Belongs to the peptidase M50B family.

It is found in the plastid. The protein resides in the chloroplast membrane. Functionally, probable membrane-associated metalloprotease that may be involved in chloroplast development. The sequence is that of Probable zinc metallopeptidase EGY3, chloroplastic (EGY3) from Arabidopsis thaliana (Mouse-ear cress).